We begin with the raw amino-acid sequence, 2222 residues long: Voltage-dependent R-type calcium channel subunit alpha-1E (2222 aa).

Residues 1-40 (MALYNPIPVRQNCFTVNRSLFIFGEDNIVRKYAKKLIDWP) lie on the Cytoplasmic side of the membrane. The stretch at 27–305 (NIVRKYAKKL…LVLGVLSGEF (279 aa)) is one I repeat. Residues 41-59 (PFEYMILATIIANCIVLAL) traverse the membrane as a helical segment. At 60–78 (EQHLPEDDKTPMSRRLEKT) the chain is on the extracellular side. Residues 79–97 (EPYFIGIFCFEAGIKIVAL) form a helical membrane-spanning segment. At 98–109 (GFIFHKGSYLRN) the chain is on the cytoplasmic side. A helical transmembrane segment spans residues 110–124 (GWNVMDFIVVLSGIL). Residues 125 to 136 (ATAGTHFNTHVD) lie on the Extracellular side of the membrane. The helical transmembrane segment at 137–156 (LRTLRAVRVLRPLKLVSGIP) threads the bilayer. The Cytoplasmic segment spans residues 157-174 (SLQIVLKSIMKAMVPLLQ). A helical transmembrane segment spans residues 175-195 (IGLLLFFAILMFAIIGLEFYS). The Extracellular segment spans residues 196–277 (GKLHRACFMN…NTNDALGATW (82 aa)). The N-linked (GlcNAc...) asparagine glycan is linked to asparagine 205. Residues 278–301 (NWLYFIPLIIIGSFFVLNLVLGVL) form a helical membrane-spanning segment. At 302 to 427 (SGEFAKERER…ISIRHMVKSQ (126 aa)) the chain is on the cytoplasmic side. The binding to the beta subunit stretch occupies residues 325-342 (QQIERELNGYRAWIDKAE). Ca(2+) is bound at residue aspartate 377. The residue at position 378 (serine 378) is a Phosphoserine. Serine 379, glutamate 381, and cysteine 383 together coordinate Ca(2+). Threonine 391 bears the Phosphothreonine mark. Residues 413–657 (ERLLRISIRH…VFLAIAVDNL (245 aa)) form an II repeat. The chain crosses the membrane as a helical span at residues 428 to 447 (VFYWIVLSVVALNTACVAIV). The Extracellular segment spans residues 448 to 460 (HHNQPQWLTHLLY). A helical membrane pass occupies residues 461–480 (YAEFLFLGLFLLEMSLKMYG). At 481 to 489 (MGPRLYFHS) the chain is on the cytoplasmic side. Residues 490–508 (SFNCFDFGVTVGSIFEVVW) form a helical membrane-spanning segment. Residues 509-518 (AIFRPGTSFG) lie on the Extracellular side of the membrane. The chain crosses the membrane as a helical span at residues 519–537 (ISVLRALRLLRIFKITKYW). The Cytoplasmic portion of the chain corresponds to 538–556 (ASLRNLVVSLMSSMKSIIS). The helical transmembrane segment at 557–576 (LLFLLFLFIVVFALLGMQLF) threads the bilayer. Over 577-629 (GGRFNFNDGTPSANFDTFPAAIMTVFQILTGEDWNEVMYNGIRSQGGVSSGMW) the chain is Extracellular. Residues 630–654 (SAIYFIVLTLFGNYTLLNVFLAIAV) traverse the membrane as a helical segment. The Cytoplasmic segment spans residues 655 to 1100 (DNLANAQELT…TNPIRKACHY (446 aa)). A disordered region spans residues 680–727 (LQKAKEVSPMSAPNMPSIERDRRRRHHMSMWEPRSSHLRERRRRHHMS). Phosphoserine is present on residues serine 687, serine 696, serine 744, serine 766, and serine 806. 2 disordered regions span residues 820-944 (NQRS…VPRG) and 1042-1076 (NKTD…RETG). Basic residues predominate over residues 864-877 (RHRQSQRRSRHRRV). Positions 884–896 (SASASRSRSASQE) are enriched in low complexity. Serine 898 carries the phosphoserine modification. Composition is skewed to basic and acidic residues over residues 906 to 935 (DGEK…DLRR) and 1044 to 1055 (TDGEASPLKEAE). The residue at position 1049 (serine 1049) is a Phosphoserine. Residues 1092–1378 (NPIRKACHYI…IFVALIIITF (287 aa)) form an III repeat. Residues 1101-1117 (IVNLRYFEMCILLVIAA) traverse the membrane as a helical segment. Over 1118 to 1141 (SSIALAAEDPVLTNSERNKVLRYF) the chain is Extracellular. A helical membrane pass occupies residues 1142 to 1161 (DYVFTGVFTFEMVIKMIDQG). The Cytoplasmic segment spans residues 1162–1169 (LILQDGSY). A helical transmembrane segment spans residues 1170-1192 (FRDLWNILDFVVVVGALVAFALA). At 1193–1206 (NALGTNKGRDIKTI) the chain is on the extracellular side. Residues 1207–1224 (KSLRVLRVLRPLKTIKRL) form a helical membrane-spanning segment. Residues 1225–1243 (PKLKAVFDCVVTSLKNVFN) are Cytoplasmic-facing. Residues 1244–1263 (ILIVYKLFMFIFAVIAVQLF) traverse the membrane as a helical segment. Over 1264–1350 (KGKFFYCTDS…RGPSRSNRME (87 aa)) the chain is Extracellular. A helical transmembrane segment spans residues 1351–1374 (MSIFYVVYFVVFPFFFVNIFVALI). At 1375-1431 (IITFQEQGDKMMEECSLEKNERACIDFAISAKPLTRYMPQNRHTFQYRVWHFVVSPS) the chain is on the cytoplasmic side. The stretch at 1415–1678 (NRHTFQYRVW…LFVAVIMDNF (264 aa)) is one IV repeat. The helical transmembrane segment at 1432–1450 (FEYTIMAMIALNTVVLMMK) threads the bilayer. Residues 1451–1467 (YYSAPWTYELALKYLNI) are Extracellular-facing. Residues 1468–1485 (AFTMVFSLECVLKVIAFG) form a helical membrane-spanning segment. Residues 1486–1493 (FLNYFRDT) are Cytoplasmic-facing. Residues 1494-1512 (WNIFDFITVIGSITEIILT) form a helical membrane-spanning segment. The Extracellular segment spans residues 1513 to 1523 (DSKLVNTSGFN). Asparagine 1518 and asparagine 1523 each carry an N-linked (GlcNAc...) asparagine glycan. Residues 1524–1542 (MSFLKLFRAARLIKLLRQG) traverse the membrane as a helical segment. The Cytoplasmic segment spans residues 1543 to 1561 (YTIRILLWTFVQSFKALPY). The chain crosses the membrane as a helical span at residues 1562 to 1581 (VCLLIAMLFFIYAIIGMQVF). Residues 1582–1650 (GNIKLDEESH…NESERCGTDL (69 aa)) are Extracellular-facing. Asparagine 1641 carries an N-linked (GlcNAc...) asparagine glycan. The chain crosses the membrane as a helical span at residues 1651 to 1676 (AYVYFVSFIFFCSFLMLNLFVAVIMD). Residues 1677–2222 (NFEYLTRDSS…LSDTEEDDKC (546 aa)) lie on the Cytoplasmic side of the membrane. An EF-hand domain is found at 1691-1726 (HHLDEFVRVWAEYDRAACGRIHYTEMYEMLTLMSPP). Ca(2+) contacts are provided by aspartate 1704, arginine 1710, and glutamate 1715. Residues 1970–2135 (SAHRLNSDSG…QQGQHPSPQH (166 aa)) are disordered. Residues 1974 to 1994 (LNSDSGHKSDTHRSGGRERGR) show a composition bias toward basic and acidic residues. 2 positions are modified to phosphoserine: serine 2003 and serine 2022. Positions 2010 to 2027 (NSEERGTQADWESPERRQ) are enriched in basic and acidic residues. The span at 2046 to 2061 (SLSESSIPSISDTSTP) shows a compositional bias: low complexity. A compositionally biased stretch (polar residues) spans 2104 to 2123 (LASQALESNSACLTESSNSL). Positions 2124 to 2135 (HPQQGQHPSPQH) are enriched in low complexity.

It belongs to the calcium channel alpha-1 subunit (TC 1.A.1.11) family. CACNA1E subfamily. In terms of assembly, interacts with EFHC1. Voltage-dependent calcium channels are multisubunit complexes, consisting of alpha-1, alpha-2, beta and delta subunits in a 1:1:1:1 ratio. The channel activity is directed by the pore-forming and voltage-sensitive alpha-1 subunit. In many cases, this subunit is sufficient to generate voltage-sensitive calcium channel activity. The auxiliary subunits beta and alpha-2/delta linked by a disulfide bridge regulate the channel activity. Expressed in central nervous system and in insulinoma.

It localises to the membrane. It carries out the reaction Ca(2+)(in) = Ca(2+)(out). In terms of biological role, voltage-sensitive calcium channels (VSCC) mediate the entry of calcium ions into excitable cells and are also involved in a variety of calcium-dependent processes, including muscle contraction, hormone or neurotransmitter release, gene expression, cell motility, cell division and cell death. The isoform alpha-1E gives rise to R-type calcium currents. R-type calcium channels belong to the 'high-voltage activated' (HVA) group and are blocked by nickel. They are however insensitive to dihydropyridines (DHP). Calcium channels containing alpha-1E subunit could be involved in the modulation of firing patterns of neurons which is important for information processing. This is Voltage-dependent R-type calcium channel subunit alpha-1E (Cacna1e) from Rattus norvegicus (Rat).